The chain runs to 468 residues: Ribulose bisphosphate carboxylase large chain (468 aa).

Lys-5 is subject to N6,N6,N6-trimethyllysine. Substrate is bound by residues Asn-114 and Thr-164. Lys-166 acts as the Proton acceptor in catalysis. Residue Lys-168 coordinates substrate. The Mg(2+) site is built by Lys-192, Asp-194, and Glu-195. Lys-192 is modified (N6-carboxylysine). His-285 acts as the Proton acceptor in catalysis. Substrate-binding residues include Arg-286, His-318, and Ser-370.

It belongs to the RuBisCO large chain family. Type I subfamily. In terms of assembly, heterohexadecamer of 8 large chains and 8 small chains; disulfide-linked. The disulfide link is formed within the large subunit homodimers. It depends on Mg(2+) as a cofactor. Post-translationally, the disulfide bond which can form in the large chain dimeric partners within the hexadecamer appears to be associated with oxidative stress and protein turnover.

Its subcellular location is the plastid. The protein localises to the chloroplast. The catalysed reaction is 2 (2R)-3-phosphoglycerate + 2 H(+) = D-ribulose 1,5-bisphosphate + CO2 + H2O. It carries out the reaction D-ribulose 1,5-bisphosphate + O2 = 2-phosphoglycolate + (2R)-3-phosphoglycerate + 2 H(+). Its function is as follows. RuBisCO catalyzes two reactions: the carboxylation of D-ribulose 1,5-bisphosphate, the primary event in carbon dioxide fixation, as well as the oxidative fragmentation of the pentose substrate in the photorespiration process. Both reactions occur simultaneously and in competition at the same active site. The polypeptide is Ribulose bisphosphate carboxylase large chain (Anthocercis viscosa (Sticky tailflower)).